We begin with the raw amino-acid sequence, 308 residues long: Porphobilinogen deaminase (308 aa).

Cysteine 240 carries the post-translational modification S-(dipyrrolylmethanemethyl)cysteine.

Belongs to the HMBS family. As to quaternary structure, monomer. The cofactor is dipyrromethane.

It catalyses the reaction 4 porphobilinogen + H2O = hydroxymethylbilane + 4 NH4(+). The protein operates within porphyrin-containing compound metabolism; protoporphyrin-IX biosynthesis; coproporphyrinogen-III from 5-aminolevulinate: step 2/4. Its function is as follows. Tetrapolymerization of the monopyrrole PBG into the hydroxymethylbilane pre-uroporphyrinogen in several discrete steps. The chain is Porphobilinogen deaminase from Laribacter hongkongensis (strain HLHK9).